A 292-amino-acid polypeptide reads, in one-letter code: WRKY transcription factor 55 (292 aa).

The segment at 133–155 (VERSGASGSSTPRQRRRKDEGEE) is disordered. Residues 167–235 (NTDLPPDDNH…YRGSHTCYNS (69 aa)) constitute a DNA-binding region (WRKY).

It belongs to the WRKY group III family.

The protein resides in the nucleus. Functionally, transcription factor. Interacts specifically with the W box (5'-(T)TGAC[CT]-3'), a frequently occurring elicitor-responsive cis-acting element. The polypeptide is WRKY transcription factor 55 (WRKY55) (Arabidopsis thaliana (Mouse-ear cress)).